The chain runs to 181 residues: uncharacterized protein (181 aa).

2 consecutive transmembrane segments (helical) span residues 24 to 46 (IAAVLISTSFVLFGFLALVLLNV) and 55 to 77 (GIVAIVSLIAIWVLMTAGVYILL).

It is found in the cell membrane. This is an uncharacterized protein from Archaeoglobus fulgidus (strain ATCC 49558 / DSM 4304 / JCM 9628 / NBRC 100126 / VC-16).